The following is a 378-amino-acid chain: Mas-related G-protein coupled receptor MRG (378 aa).

Residues 1–77 (MVWGKICWFS…VGQQALPLNI (77 aa)) lie on the Extracellular side of the membrane. Asparagine 54 and asparagine 57 each carry an N-linked (GlcNAc...) asparagine glycan. Residues 78–101 (IAPKAVLVSLCGVLLNGTVFWLLC) form a helical membrane-spanning segment. Residues 102-109 (CGATNPYM) lie on the Cytoplasmic side of the membrane. The chain crosses the membrane as a helical span at residues 110–136 (VYILHLVAADVIYLCCSAVGFLQVTLL). The Extracellular portion of the chain corresponds to 137–154 (TYHGVVFFIPDFLAILSP). A helical transmembrane segment spans residues 155–169 (FSFEVCLCLLVAIST). Residues 170–191 (ERCVCVLFPIWYRCHRPKYTSN) lie on the Cytoplasmic side of the membrane. The chain crosses the membrane as a helical span at residues 192–207 (VVCTLIWGLPFCINIV). Over 208–221 (KSLFLTYWKHVKAC) the chain is Extracellular. The helical transmembrane segment at 222 to 248 (VIFLKLSGLFHAILSLVMCVSSLTLLI) threads the bilayer. The Cytoplasmic segment spans residues 249–264 (RFLCCSQQQKATRVYA). A helical membrane pass occupies residues 265–286 (VVQISAPMFLLWALPLSVAPLI). The Extracellular segment spans residues 287 to 297 (TDFKMFVTTSY). A helical membrane pass occupies residues 298-317 (LISLFLIINSSANPIIYFFV). At 318–378 (GSLRKKRLKE…PREHRVDVET (61 aa)) the chain is on the cytoplasmic side. A disordered region spans residues 344-378 (GRNKKAAGIDPMEQPHSTQHVENLLPREHRVDVET). Residues 368-378 (LPREHRVDVET) are compositionally biased toward basic and acidic residues.

Belongs to the G-protein coupled receptor 1 family. Mas subfamily.

The protein localises to the cell membrane. The chain is Mas-related G-protein coupled receptor MRG (MAS1L) from Homo sapiens (Human).